The following is a 178-amino-acid chain: Ribosome maturation factor RimM (178 aa).

A PRC barrel domain is found at 99–178; it reads QGEFYWRDLI…EITVDWDPGF (80 aa).

This sequence belongs to the RimM family. Binds ribosomal protein uS19.

It is found in the cytoplasm. Its function is as follows. An accessory protein needed during the final step in the assembly of 30S ribosomal subunit, possibly for assembly of the head region. Essential for efficient processing of 16S rRNA. May be needed both before and after RbfA during the maturation of 16S rRNA. It has affinity for free ribosomal 30S subunits but not for 70S ribosomes. This is Ribosome maturation factor RimM from Pseudoalteromonas translucida (strain TAC 125).